We begin with the raw amino-acid sequence, 127 residues long: Nitrogenase-stabilizing/protective protein NifW (127 aa).

It belongs to the NifW family. Homotrimer; associates with NifD.

Functionally, may protect the nitrogenase Fe-Mo protein from oxidative damage. The sequence is that of Nitrogenase-stabilizing/protective protein NifW from Rhizobium etli (strain ATCC 51251 / DSM 11541 / JCM 21823 / NBRC 15573 / CFN 42).